The following is a 118-amino-acid chain: UPF0295 protein BA_0538/GBAA_0538/BAS0506 (118 aa).

2 helical membrane-spanning segments follow: residues 12–32 (IRTF…LGVF) and 43–63 (FMMV…WIGM).

This sequence belongs to the UPF0295 family.

Its subcellular location is the cell membrane. The protein is UPF0295 protein BA_0538/GBAA_0538/BAS0506 of Bacillus anthracis.